Reading from the N-terminus, the 188-residue chain is Elongation factor P (188 aa).

This sequence belongs to the elongation factor P family.

The protein localises to the cytoplasm. The protein operates within protein biosynthesis; polypeptide chain elongation. Involved in peptide bond synthesis. Stimulates efficient translation and peptide-bond synthesis on native or reconstituted 70S ribosomes in vitro. Probably functions indirectly by altering the affinity of the ribosome for aminoacyl-tRNA, thus increasing their reactivity as acceptors for peptidyl transferase. The polypeptide is Elongation factor P (Chloroherpeton thalassium (strain ATCC 35110 / GB-78)).